The following is a 359-amino-acid chain: Tropomodulin-1 (359 aa).

Residues 36 to 61 form a disordered region; that stretch reads ELDPDNALLPAGLRQKDQTTKAPTGP. The tract at residues 39 to 138 is tropomyosin-binding; the sequence is PDNALLPAGL…CDIAAILGMH (100 aa).

The protein belongs to the tropomodulin family. Binds to the N-terminus of tropomyosin and to actin. Interacts with FLII. Highly expressed in the erythrocyte, heart and skeletal muscle.

The protein localises to the cytoplasm. It localises to the cytoskeleton. Its function is as follows. Blocks the elongation and depolymerization of the actin filaments at the pointed end. The Tmod/TM complex contributes to the formation of the short actin protofilament, which in turn defines the geometry of the membrane skeleton. This is Tropomodulin-1 (Tmod1) from Mus musculus (Mouse).